Consider the following 912-residue polypeptide: Protein translocase subunit SecA (912 aa).

ATP is bound by residues glutamine 87, 105–109 (GEGKT), and aspartate 510. The interval 854–912 (KLRHEQASAAQAEGEGDDGQQGQQATPETFVRQERKVGRNEPCPCGSGKKYKQCCGKVS) is disordered. Residues cysteine 896, cysteine 898, cysteine 907, and cysteine 908 each coordinate Zn(2+).

The protein belongs to the SecA family. Monomer and homodimer. Part of the essential Sec protein translocation apparatus which comprises SecA, SecYEG and auxiliary proteins SecDF-YajC and YidC. Requires Zn(2+) as cofactor.

Its subcellular location is the cell inner membrane. The protein localises to the cytoplasm. It carries out the reaction ATP + H2O + cellular proteinSide 1 = ADP + phosphate + cellular proteinSide 2.. In terms of biological role, part of the Sec protein translocase complex. Interacts with the SecYEG preprotein conducting channel. Has a central role in coupling the hydrolysis of ATP to the transfer of proteins into and across the cell membrane, serving both as a receptor for the preprotein-SecB complex and as an ATP-driven molecular motor driving the stepwise translocation of polypeptide chains across the membrane. This Marinobacter nauticus (strain ATCC 700491 / DSM 11845 / VT8) (Marinobacter aquaeolei) protein is Protein translocase subunit SecA.